A 210-amino-acid polypeptide reads, in one-letter code: Putative odorant-binding protein A5 (210 aa).

A signal peptide spans Met-1–Ser-19.

It belongs to the phosphatidylethanolamine-binding protein family. As to expression, cells at the bases of a few scattered sensilla on the posterior surface of the antenna.

The protein resides in the secreted. The chain is Putative odorant-binding protein A5 (a5) from Drosophila melanogaster (Fruit fly).